We begin with the raw amino-acid sequence, 193 residues long: Xanthine phosphoribosyltransferase (193 aa).

Residues Leu-20 and Asn-27 each contribute to the xanthine site. Ala-127–Ala-131 is a binding site for 5-phospho-alpha-D-ribose 1-diphosphate. Position 155 (Lys-155) interacts with xanthine.

The protein belongs to the purine/pyrimidine phosphoribosyltransferase family. Xpt subfamily. In terms of assembly, homodimer.

The protein localises to the cytoplasm. It catalyses the reaction XMP + diphosphate = xanthine + 5-phospho-alpha-D-ribose 1-diphosphate. It functions in the pathway purine metabolism; XMP biosynthesis via salvage pathway; XMP from xanthine: step 1/1. Its function is as follows. Converts the preformed base xanthine, a product of nucleic acid breakdown, to xanthosine 5'-monophosphate (XMP), so it can be reused for RNA or DNA synthesis. The sequence is that of Xanthine phosphoribosyltransferase from Porphyromonas gingivalis (strain ATCC BAA-308 / W83).